Reading from the N-terminus, the 201-residue chain is Lipopolysaccharide core heptose(II)-phosphate phosphatase (201 aa).

Residues 1-35 (MLAFTLRFIKNKRYLATLAGALVIIAGLTSQHAWS) form the signal peptide.

This sequence belongs to the phosphoglycerate mutase family. Ais subfamily.

It is found in the periplasm. The protein operates within bacterial outer membrane biogenesis; lipopolysaccharide metabolism. Functionally, catalyzes the dephosphorylation of heptose(II) of the outer membrane lipopolysaccharide core. The polypeptide is Lipopolysaccharide core heptose(II)-phosphate phosphatase (Salmonella paratyphi A (strain AKU_12601)).